Reading from the N-terminus, the 258-residue chain is Small ribosomal subunit protein uS2 (258 aa).

Belongs to the universal ribosomal protein uS2 family.

This is Small ribosomal subunit protein uS2 from Leuconostoc mesenteroides subsp. mesenteroides (strain ATCC 8293 / DSM 20343 / BCRC 11652 / CCM 1803 / JCM 6124 / NCDO 523 / NBRC 100496 / NCIMB 8023 / NCTC 12954 / NRRL B-1118 / 37Y).